Consider the following 155-residue polypeptide: MYKIQLLSCIALTLALVANGAPTSSSTGNTMKEVKSLLLDLQLLLEKVKNPENLKLSRMHTFNFYVPKVNSTELKHLKCLLEELKLLEEVLNLAPSKNLNLREIKDSMDNIKRIVLELQGSETTFTCEYDNATVKAAEFLNKWITFCQSIYSTMT.

Residues 1-20 (MYKIQLLSCIALTLALVANG) form the signal peptide. Thr23 carries an O-linked (GalNAc...) threonine glycan. A disulfide bond links Cys79 and Cys127.

This sequence belongs to the IL-2 family.

It is found in the secreted. In terms of biological role, cytokine produced by activated CD4-positive helper T-cells and to a lesser extend activated CD8-positive T-cells and natural killer (NK) cells that plays pivotal roles in the immune response and tolerance. Binds to a receptor complex composed of either the high-affinity trimeric IL-2R (IL2RA/CD25, IL2RB/CD122 and IL2RG/CD132) or the low-affinity dimeric IL-2R (IL2RB and IL2RG). Interaction with the receptor leads to oligomerization and conformation changes in the IL-2R subunits resulting in downstream signaling starting with phosphorylation of JAK1 and JAK3. In turn, JAK1 and JAK3 phosphorylate the receptor to form a docking site leading to the phosphorylation of several substrates including STAT5. This process leads to activation of several pathways including STAT, phosphoinositide-3-kinase/PI3K and mitogen-activated protein kinase/MAPK pathways. Functions as a T-cell growth factor and can increase NK-cell cytolytic activity as well. Promotes strong proliferation of activated B-cells and subsequently immunoglobulin production. Plays a pivotal role in regulating the adaptive immune system by controlling the survival and proliferation of regulatory T-cells, which are required for the maintenance of immune tolerance. Moreover, participates in the differentiation and homeostasis of effector T-cell subsets, including Th1, Th2, Th17 as well as memory CD8-positive T-cells. This chain is Interleukin-2 (IL2), found in Moschus berezovskii (Chinese forest musk deer).